Consider the following 259-residue polypeptide: Adenosylcobinamide-GDP ribazoletransferase (259 aa).

Helical transmembrane passes span 9–29 (NLFFIAMGFFTRIPMPKWIEV), 43–63 (LVGLLVGAISALVYTLMLYWV), 64–84 (SPSIAIVLAMITSVLVTGGFH), 118–138 (ALALVLALLLKWQLLTELALF), 143–163 (VSLALIVGHCLSRVVAASFIF), and 190–210 (ILLATGILALLLVGVMQALVL).

This sequence belongs to the CobS family. The cofactor is Mg(2+).

Its subcellular location is the cell inner membrane. The catalysed reaction is alpha-ribazole + adenosylcob(III)inamide-GDP = adenosylcob(III)alamin + GMP + H(+). The enzyme catalyses alpha-ribazole 5'-phosphate + adenosylcob(III)inamide-GDP = adenosylcob(III)alamin 5'-phosphate + GMP + H(+). It functions in the pathway cofactor biosynthesis; adenosylcobalamin biosynthesis; adenosylcobalamin from cob(II)yrinate a,c-diamide: step 7/7. In terms of biological role, joins adenosylcobinamide-GDP and alpha-ribazole to generate adenosylcobalamin (Ado-cobalamin). Also synthesizes adenosylcobalamin 5'-phosphate from adenosylcobinamide-GDP and alpha-ribazole 5'-phosphate. This is Adenosylcobinamide-GDP ribazoletransferase from Shewanella pealeana (strain ATCC 700345 / ANG-SQ1).